The sequence spans 557 residues: Formate--tetrahydrofolate ligase (557 aa).

66–73 (TPAGEGKS) contacts ATP.

Belongs to the formate--tetrahydrofolate ligase family.

It carries out the reaction (6S)-5,6,7,8-tetrahydrofolate + formate + ATP = (6R)-10-formyltetrahydrofolate + ADP + phosphate. It functions in the pathway one-carbon metabolism; tetrahydrofolate interconversion. The protein is Formate--tetrahydrofolate ligase of Clostridium botulinum (strain 657 / Type Ba4).